A 432-amino-acid chain; its full sequence is Negative regulator of systemic acquired resistance SNI1 (432 aa).

Interacts with SSN2. Binds to NTL9/CBNAC to promote its binding to promoters of target genes. Component of the SMC5-SMC6 complex which consists at least of SMC5 and SMC6B. Interacts with RAD17. In terms of tissue distribution, expressed at low levels in the veins.

The protein localises to the nucleus. In terms of biological role, component of the SMC5-SMC6 complex, a complex involved in repair of DNA double-strand breaks by homologous recombination. Transcription repressor that prevents expression of pathogenesis-related genes (PR) via histone modifications and binding negative cis-acting elements at their promoters. Negative regulator of hypersensitive response (HR) and systemic acquired resistance (SAR) required to dampen the basal expression of pathogenesis related (PR) genes. Functions synergistically with NTL9/CBNAC as negative regulator of pathogen-induced PR1 expression and basal resistance to a virulent strain of P.syringae. Binds to the PR1 gene promoter to suppress defense response in the absence of pathogen challenge and is removed in response to induction. Negatively regulates both gene expression and DNA recombination during pathogen infection, thus being involved in short-term defense response and a long-term survival strategy. Prevents effective immune responses that involve activation of DNA damage responses, probably by negatively regulating the DNA damage sensors RAD17 and ATR. Negative regulator of defenses against the beet cyst nematode H.schachtii. This is Negative regulator of systemic acquired resistance SNI1 from Arabidopsis thaliana (Mouse-ear cress).